The sequence spans 147 residues: uncharacterized protein (147 aa).

One can recognise an HTH LytTR-type domain in the interval 44–147 (LVGYIDKEIH…LKSIKERLSI (104 aa)).

The protein resides in the cytoplasm. This is an uncharacterized protein from Staphylococcus aureus (strain MW2).